A 68-amino-acid polypeptide reads, in one-letter code: MITKEMIDRINFLYHKSKSEGLTEEEKEEQRRLREAYVKEIKERVKRELDNLFADASHHHHHCHHHEH.

The protein belongs to the UPF0291 family.

The protein resides in the cytoplasm. The chain is UPF0291 protein TTE2340 from Caldanaerobacter subterraneus subsp. tengcongensis (strain DSM 15242 / JCM 11007 / NBRC 100824 / MB4) (Thermoanaerobacter tengcongensis).